The following is a 788-amino-acid chain: Nuclear autoantigenic sperm protein (788 aa).

Residue alanine 2 is modified to N-acetylalanine. Lysine 33 is subject to N6-acetyllysine. The TPR 1 repeat unit spans residues 43–76; sequence AKKLLGLGQKHLVMGDIPAAVNAFQEAASLLGKK. The segment at 114–139 is disordered; the sequence is HVEEEEGEKTEDESLVENNDNIDEEA. A histone-binding region spans residues 116-127; that stretch reads EEEEGEKTEDES. A compositionally biased stretch (acidic residues) spans 116–139; sequence EEEEGEKTEDESLVENNDNIDEEA. Position 123 is a phosphothreonine (threonine 123). Serine 127 bears the Phosphoserine mark. The residue at position 138 (glutamate 138) is a Phosphothreonine. Residue glutamate 141 is modified to Phosphoserine. The span at 151–201 shows a compositional bias: basic and acidic residues; that stretch reads MGEKEEAKKTEDKSLAKPETDKEQDSEMEKGGREDMDISKSAEEPQEKVDL. Residues 151–507 form a disordered region; sequence MGEKEEAKKT…VLENKSLQEN (357 aa). Threonine 170 carries the post-translational modification Phosphothreonine. A phosphoserine mark is found at serine 176, serine 189, and serine 191. A histone-binding region spans residues 211–244; the sequence is EEAKGGAAPEGPNEAEVTSGKPEQEVPDAEEEKS. Lysine 243 carries the post-translational modification N6-acetyllysine. At serine 244 the chain carries Phosphoserine. The segment covering 252–278 has biased composition (basic and acidic residues); that stretch reads EECREKGGQEKQGEVIVSIEEKPKEVS. An N6-acetyllysine modification is found at lysine 288. Phosphoserine is present on residues serine 299 and serine 321. Positions 337–362 are enriched in low complexity; the sequence is EVPPAEESPEVTTEAAEASAVEAGSE. At threonine 390 the chain carries Phosphothreonine. Serine 397, serine 408, serine 421, and serine 451 each carry phosphoserine. Basic and acidic residues predominate over residues 400 to 415; sequence RLTETKDGSGLEEKVR. Phosphothreonine is present on residues threonine 464 and threonine 477. A histone-binding region spans residues 469 to 512; that stretch reads EQMKEGEETEGSEEDDKENDKTEEMPNDSVLENKSLQENEEEEI. Residues 475-485 are compositionally biased toward acidic residues; it reads EETEGSEEDDK. A Phosphoserine modification is found at serine 480. The residue at position 490 (threonine 490) is a Phosphothreonine. Phosphoserine is present on residues serine 497 and serine 503. TPR repeat units follow at residues 542 to 575 and 584 to 617; these read AQAHLKLGEVSVESENYVQAVEEFQSCLNLQEQY and AETHYQLGLAYGYNSQYDEAVAQFSKSIEVIENR. A coiled-coil region spans residues 604–659; it reads VAQFSKSIEVIENRMAVLNEQVKEAEGSSAEYKKEIEELKELLPEIREKIEDAKES. Serine 662 carries the post-translational modification Phosphoserine. The disordered stretch occupies residues 678-788; it reads STSGFTPGGG…AGATVESTAC (111 aa). Threonine 683 is modified (phosphothreonine). A phosphoserine mark is found at serine 705 and serine 706. The short motif at 716 to 722 is the Nuclear localization signal element; that stretch reads VRKKRKP. Basic and acidic residues predominate over residues 721 to 739; that stretch reads KPEEESPRKDDAKKAKQEP. A Phosphoserine modification is found at serine 726. A Glycyl lysine isopeptide (Lys-Gly) (interchain with G-Cter in SUMO1) cross-link involves residue lysine 736. Phosphoserine is present on residues serine 745, serine 751, and serine 756.

Belongs to the NASP family. In terms of assembly, binds to linker H1 histones. Interacts with histones H2A, H2B, H3 and H4. Interacts with histone H3.3. Interacts with histones H3 and H4; NASP is a histone chaperone that stabilizes and maintains a soluble pool of histone H3-H4 dimers. Interacts with ASF1A and ASF1B; the interaction is probably indirect and mediated by H3-H4. Also binds to HSP90 in the cytoplasm; this interaction stimulates binding of NASP to H1-6/H1T. As to expression, isoform 1 is testis- and sperm-specific.

It localises to the cytoplasm. Its subcellular location is the nucleus. Component of the histone chaperone network. Binds and stabilizes histone H3-H4 not bound to chromatin to maintain a soluble reservoir and modulate degradation by chaperone-mediated autophagy. Required for DNA replication, normal cell cycle progression and cell proliferation. Forms a cytoplasmic complex with HSP90 and H1 linker histones and stimulates HSP90 ATPase activity. NASP and H1 histone are subsequently released from the complex and translocate to the nucleus where the histone is released for binding to DNA. Its function is as follows. Stabilizes soluble histone H3-H4. The chain is Nuclear autoantigenic sperm protein (NASP) from Homo sapiens (Human).